Consider the following 472-residue polypeptide: Chromosomal replication initiator protein DnaA (472 aa).

A domain I, interacts with DnaA modulators region spans residues 1–73 (MSNMEHDRWS…LTCWQAELPE (73 aa)). The domain II stretch occupies residues 73–128 (EVCRIDLTVRSPMRAAVAKEAAAPVEHRRAEHRPATETRSHATVPASSNHDALGGS). Residues 92-127 (EAAAPVEHRRAEHRPATETRSHATVPASSNHDALGG) are disordered. Positions 97-112 (VEHRRAEHRPATETRS) are enriched in basic and acidic residues. The interval 129–351 (PLDPRLTFAS…GAINRLLAHS (223 aa)) is domain III, AAA+ region. 4 residues coordinate ATP: glycine 176, glycine 178, lysine 179, and threonine 180. Residues 352 to 472 (KLNAQPVTLE…VDSLKRQLQE (121 aa)) form a domain IV, binds dsDNA region.

This sequence belongs to the DnaA family. Oligomerizes as a right-handed, spiral filament on DNA at oriC.

Its subcellular location is the cytoplasm. Plays an essential role in the initiation and regulation of chromosomal replication. ATP-DnaA binds to the origin of replication (oriC) to initiate formation of the DNA replication initiation complex once per cell cycle. Binds the DnaA box (a 9 base pair repeat at the origin) and separates the double-stranded (ds)DNA. Forms a right-handed helical filament on oriC DNA; dsDNA binds to the exterior of the filament while single-stranded (ss)DNA is stabiized in the filament's interior. The ATP-DnaA-oriC complex binds and stabilizes one strand of the AT-rich DNA unwinding element (DUE), permitting loading of DNA polymerase. After initiation quickly degrades to an ADP-DnaA complex that is not apt for DNA replication. Binds acidic phospholipids. The polypeptide is Chromosomal replication initiator protein DnaA (Rhodopseudomonas palustris (strain HaA2)).